Consider the following 738-residue polypeptide: Probable trehalase (738 aa).

The tract at residues 1-44 (MLQGMPKRSGSISELHDPFSSPDVYYGPATDPRRQKQPNKYSRT) is disordered. Substrate contacts are provided by residues Arg289, 296-297 (WD), Asn333, Arg342, 342-344 (RSQ), and Gly463. Active-site proton donor/acceptor residues include Asp465 and Glu660.

Belongs to the glycosyl hydrolase 37 family.

It catalyses the reaction alpha,alpha-trehalose + H2O = alpha-D-glucose + beta-D-glucose. The chain is Probable trehalase (NTH2) from Eremothecium gossypii (strain ATCC 10895 / CBS 109.51 / FGSC 9923 / NRRL Y-1056) (Yeast).